We begin with the raw amino-acid sequence, 652 residues long: Bifunctional protein ThiO/ThiG (652 aa).

Positions 1–366 are thiO; that stretch reads MTRDIVIIGG…HYSRSQKQAS (366 aa). Residues 5 to 19 and 44 to 46 each bind FAD; these read IVII…AIAV and AGM. Glycine is bound at residue Glu-52. An FAD-binding site is contributed by Val-173. Glycine-binding residues include Arg-301 and Arg-327. 325–331 serves as a coordination point for FAD; it reads HYRNGIL. The interval 393 to 652 is thiG; sequence PLIIAGKSFH…ASSPVTGTIS (260 aa). Lys-494 (schiff-base intermediate with DXP) is an active-site residue. 1-deoxy-D-xylulose 5-phosphate contacts are provided by residues Gly-555, 581 to 582, and 603 to 604; these read AG and NS.

This sequence in the N-terminal section; belongs to the DAO family. ThiO subfamily. In the C-terminal section; belongs to the ThiG family. In terms of assembly, interacts with ThiH and ThiS. The cofactor is FAD.

It localises to the cytoplasm. The enzyme catalyses glycine + O2 + H2O = glyoxylate + H2O2 + NH4(+). The catalysed reaction is [ThiS sulfur-carrier protein]-C-terminal-Gly-aminoethanethioate + 2-iminoacetate + 1-deoxy-D-xylulose 5-phosphate = [ThiS sulfur-carrier protein]-C-terminal Gly-Gly + 2-[(2R,5Z)-2-carboxy-4-methylthiazol-5(2H)-ylidene]ethyl phosphate + 2 H2O + H(+). It functions in the pathway cofactor biosynthesis; thiamine diphosphate biosynthesis. Catalyzes the FAD-dependent oxidative deamination of glycine. Is essential for thiamine biosynthesis since the oxidation of glycine catalyzed by ThiO generates the glycine imine intermediate (dehydroglycine) required for the biosynthesis of the thiazole ring of thiamine pyrophosphate. In terms of biological role, catalyzes the rearrangement of 1-deoxy-D-xylulose 5-phosphate (DXP) to produce the thiazole phosphate moiety of thiamine. Sulfur is provided by the thiocarboxylate moiety of the carrier protein ThiS. In vitro, sulfur can be provided by H(2)S. In Nostoc sp. (strain PCC 7120 / SAG 25.82 / UTEX 2576), this protein is Bifunctional protein ThiO/ThiG (thiO/thiG).